The primary structure comprises 336 residues: 3-isopropylmalate dehydrogenase (336 aa).

Arg-87, Arg-97, Arg-121, and Asp-211 together coordinate substrate. Positions 211, 235, and 239 each coordinate Mg(2+). Gly-271–Asp-283 is an NAD(+) binding site.

This sequence belongs to the isocitrate and isopropylmalate dehydrogenases family. LeuB type 2 subfamily. Homodimer. The cofactor is Mg(2+). Mn(2+) is required as a cofactor.

The protein resides in the cytoplasm. It carries out the reaction (2R,3S)-3-isopropylmalate + NAD(+) = 4-methyl-2-oxopentanoate + CO2 + NADH. Its pathway is amino-acid biosynthesis; L-leucine biosynthesis; L-leucine from 3-methyl-2-oxobutanoate: step 3/4. Its function is as follows. Catalyzes the oxidation of 3-carboxy-2-hydroxy-4-methylpentanoate (3-isopropylmalate) to 3-carboxy-4-methyl-2-oxopentanoate. The product decarboxylates to 4-methyl-2 oxopentanoate. In Rhodococcus jostii (strain RHA1), this protein is 3-isopropylmalate dehydrogenase.